A 420-amino-acid polypeptide reads, in one-letter code: E3 ubiquitin-protein ligase pellino homolog 2 (420 aa).

Positions 15–202 constitute an FHA; atypical domain; the sequence is EPVKYGELVV…MHPRGGFTEE (188 aa).

This sequence belongs to the pellino family. As to quaternary structure, interacts with TRAF6, IRAK1, IRAK4 and MAP3K7. Interacts with BCL10; this interaction is impaired by SOCS3. Post-translationally, phosphorylated by IRAK1 and IRAK4 enhancing its E3 ligase activity.

It catalyses the reaction S-ubiquitinyl-[E2 ubiquitin-conjugating enzyme]-L-cysteine + [acceptor protein]-L-lysine = [E2 ubiquitin-conjugating enzyme]-L-cysteine + N(6)-ubiquitinyl-[acceptor protein]-L-lysine.. It participates in protein modification; protein ubiquitination. Its function is as follows. E3 ubiquitin ligase catalyzing the covalent attachment of ubiquitin moieties onto substrate proteins. Involved in the TLR and IL-1 signaling pathways via interaction with the complex containing IRAK kinases and TRAF6. Mediates IL1B-induced IRAK1 'Lys-63'-linked polyubiquitination and possibly 'Lys-48'-linked ubiquitination. May be important for LPS- and IL1B-induced MAP3K7-dependent, but not MAP3K3-dependent, NF-kappa-B activation. Can activate the MAP (mitogen activated protein) kinase pathway leading to activation of ELK1. The sequence is that of E3 ubiquitin-protein ligase pellino homolog 2 (PELI2) from Homo sapiens (Human).